The sequence spans 90 residues: U-scoloptoxin(15)-Sa3a (90 aa).

Positions 1-18 are cleaved as a signal peptide; that stretch reads MKMVYLGLFLIITSCVIS.

This sequence belongs to the scoloptoxin-15 family. Contains 3 disulfide bonds. As to expression, expressed by the venom gland.

Its subcellular location is the secreted. The chain is U-scoloptoxin(15)-Sa3a from Scolopendra alternans (Florida Keys giant centipede).